The following is a 227-amino-acid chain: UPF0173 metal-dependent hydrolase Cmaq_1073 (227 aa).

Belongs to the UPF0173 family.

In Caldivirga maquilingensis (strain ATCC 700844 / DSM 13496 / JCM 10307 / IC-167), this protein is UPF0173 metal-dependent hydrolase Cmaq_1073.